The following is a 145-amino-acid chain: MVDYYEVLDVPRQASSEAIKKAYRKLALKWHPDKNPENKEEAERRFKQVAEAYEVLSDAKKRDIYDRYGEAGAEGGCTGGRPFEDPFEYVFSFRDPADVFREFFGGQDPFSFDLLGNPLENILGGSEELLGKQKQSVCTPFLCLQ.

The J domain occupies 1 to 69 (MVDYYEVLDV…KKRDIYDRYG (69 aa)).

Expressed in sperm (at protein level).

May operate as a co-chaperone of the male germ cell- and haploid stage-specific Hsp70 proteins. The polypeptide is DnaJ homolog subfamily B member 3 (DNAJB3) (Homo sapiens (Human)).